The sequence spans 1038 residues: Ubiquitin carboxyl-terminal hydrolase 36 (1038 aa).

Disordered regions lie at residues 22 to 44 and 107 to 148; these read LGGNSSAGSSTDQAKSGEDTNGS and ANGH…PKPK. The segment covering 23–44 has biased composition (polar residues); it reads GGNSSAGSSTDQAKSGEDTNGS. The USP domain occupies 172–480; sequence TGMINVGNTC…NAYIMFFELD (309 aa). Cys181 functions as the Nucleophile in the catalytic mechanism. His439 functions as the Proton acceptor in the catalytic mechanism. Disordered stretches follow at residues 487–794, 818–881, 912–985, and 1000–1038; these read PAAN…SKTG, GSPV…SNGS, LLVD…YNQN, and RFGGPGSAKFQQQRALQRHLSAGGGFSRRQPSAQQQQQT. Low complexity-rich tracts occupy residues 502 to 517, 546 to 559, and 587 to 606; these read STTPVPAATVSSPSPT, QQNQQSPQNGLQLG, and NGNKSSSPSSNSSSNHKSIN. Residues Ser513 and Ser515 each carry the phosphoserine modification. Residues 629 to 641 are compositionally biased toward polar residues; that stretch reads TTAQLPSMPNMTE. Thr658 and Thr662 each carry phosphothreonine. A phosphoserine mark is found at Ser672 and Ser674. Residues 703–728 are compositionally biased toward polar residues; sequence TNGHSKTNGSHTNGSASSSVHVNNSK. The segment covering 729 to 746 has biased composition (basic and acidic residues); that stretch reads QKTDAIDEIFKSLKKSAD. Position 747 is a phosphoserine (Ser747). Residues 747–756 show a composition bias toward acidic residues; it reads SDEDDDEEEP. Low complexity predominate over residues 766 to 776; sequence PQKQSQSQSKA. Over residues 777-786 the composition is skewed to pro residues; that stretch reads PPSPKTPPSP. The residue at position 779 (Ser779) is a Phosphoserine. Position 782 is a phosphothreonine (Thr782). A phosphoserine mark is found at Ser785 and Ser819. Thr825 carries the post-translational modification Phosphothreonine. Residues 832–844 show a composition bias toward polar residues; it reads NPFSSSKPSTDSP. Ser843 carries the post-translational modification Phosphoserine. Phosphothreonine is present on Thr846. The span at 859 to 881 shows a compositional bias: polar residues; sequence ALKSHQQPRVGNGYQSNATSNGS. Positions 912 to 923 are enriched in basic and acidic residues; it reads LLVDAREQRQRD. Over residues 942-953 the composition is skewed to low complexity; the sequence is SGSAKGNNASNS.

This sequence belongs to the peptidase C19 family. In terms of assembly, interacts with atms/PAF1, but not with CycT. Interacts (via C-terminus) with imd (via N-terminus).

It is found in the nucleus. The protein localises to the nucleolus. Its subcellular location is the cytoplasm. It carries out the reaction Thiol-dependent hydrolysis of ester, thioester, amide, peptide and isopeptide bonds formed by the C-terminal Gly of ubiquitin (a 76-residue protein attached to proteins as an intracellular targeting signal).. In terms of biological role, hydrolase that deubiquitinates polyubiquitinated target proteins including imd. Required for preventing the constitutive activation of the imd/NF-kappa-B (Imd) signaling cascade under unchalleneged conditions. Deubiquitinates imd linked 'Lys-63' chains which leads its proteasomal degradation and consequently down-regulation of the Imd signaling cascade. Removal of the activating 'Lys-63'-linked chains is likely to enable their replacement with 'Lys-48'-linked chains which act as 'tags' the for proteasomal degradation of imd. Required for maintaining multiple types of adult stem cells, including male and female germline, epithelial follicle cell and intestinal stem cells. May function as a transcriptional repressor by continually deubiquiting histone H2B at the promoters of genes critical for cellular differentiation, thereby preventing histone H3 'Lys-4' trimethylation (H3K4me3). Controls selective autophagy activation by ubiquitinated proteins. This is Ubiquitin carboxyl-terminal hydrolase 36 (scny) from Drosophila melanogaster (Fruit fly).